Reading from the N-terminus, the 143-residue chain is Flagellar assembly factor FliW (143 aa).

This sequence belongs to the FliW family. In terms of assembly, interacts with flagellin in a 1:1 complex. Two molecules interact with each CsrA dimer; cannot interact with both flagellin and CsrA simultaneously. Has a higher affinity for CsrA than for flagellin. Interacts directly with flagellin (hag), forms a 3-way complex of Hag, FliS and FliW in which Flis and FliW do not directly interact. Interaction with Hag may occur via the C-terminus of Hag.

It localises to the cytoplasm. In terms of biological role, acts as an anti-CsrA protein, binds CsrA and prevents it from repressing translation of its target genes, one of which is flagellin. Binds to flagellin (hag), which is implicated in polymerization, and participates in the assembly of the flagellum. An antagonist to translational regulator CsrA, it binds CsrA at an allosteric site and non-competitively inhibits CsrA binding to hag RNA. Partner switching by flagellin between FliW and CsrA provides a flagellar assembly checkpoint to tightly control the timing of flagellin synthesis. Flagellin binds to assembly factor FliW, freeing translation regulator CsrA to repress translation of the flagellin mRNA. When the flagellar hook is assembled flagellin is secreted, depleting intracellular flagellin, which frees FliW to interact with CsrA and inhibits CsrA binding to mRNA. This derepresses flagellin translation and provides protein for flagellar assembly. Once the flagellar filament is completed cytoplasmic flagellin levels rise and CsrA translation repression of flagellin reinitiates. Binds to CsrA and displaces it from hag mRNA. Binds to hag mRNA itself, but only at much higher concentrations than those required to displace CsrA. This chain is Flagellar assembly factor FliW, found in Bacillus subtilis (strain 168).